Reading from the N-terminus, the 1314-residue chain is Enfumafungin synthase efuA (1314 aa).

The segment at 1 to 680 is terpenne cyclase; that stretch reads MPSYHNTDKT…RYIDKASRQG (680 aa). 2 PFTB repeats span residues 19–62 and 66–107; these read LQQA…ELSL and GPEI…RILG. 3 consecutive transmembrane segments (helical) span residues 133–153, 155–175, and 230–250; these read FFTR…IPQM, AELI…SSWA, and YQWI…FGGL. Residues 260–300 form a PFTB 3 repeat; it reads LKRCTAWLLEHQEESGDWAGFFPPIHGSIWALLLDGFSFQS. Aspartate 395 (proton donor) is an active-site residue. 2 PFTB repeats span residues 417-458 and 546-597; these read VMNG…DSLV and CMRT…LRFR. The glycosyltransferase stretch occupies residues 681–1314; that stretch reads IETLRIPSSS…ADSVLDIEEK (634 aa). Residues 1200–1220 traverse the membrane as a helical segment; sequence AIVQLLYGFTTTILALFGWLK. Residues 1289–1314 are disordered; it reads DSGASESSRSSLDGGHADSVLDIEEK. A compositionally biased stretch (low complexity) spans 1292–1302; the sequence is ASESSRSSLDG.

The protein in the N-terminal section; belongs to the terpene cyclase/mutase family. This sequence in the C-terminal section; belongs to the glycosyltransferase 28 family.

Its subcellular location is the membrane. It participates in secondary metabolite biosynthesis; terpenoid biosynthesis. Functionally, terpene cyclase-glycosyl transferase fusion protein; part of the gene cluster that mediates the biosynthesis of enfumafungin, a glycosylated fernene-type triterpenoid with potent antifungal activity, mediated by its interaction with beta-1,3-glucan synthase and the fungal cell wall. The pathway begins with the terpene cyclase-glycosyl transferase fusion protein that most likely uses 2,3-oxidosqualene as substrate and catalyzes glycosylation immediately after cyclization. The fernene glycoside then could be processed by the desaturase efuI which catalyzes isomerization of a double bond established by efuA to form the core structure. The latter would then undergo a series of hydroxylations in unknown order at C-2, C-19, C-23 and C-25, which would be catalyzed by two of the three cytochrome P450 monooxygenases efuB, efuG or efuH. The hydroxy-group at C-25 becomes oxidized by the dehydrogenase efuE to enable a spontaneous, non-enzymatic hemiacetal formation with C-23. After hydroxylation at C-2, acetylation by the acetyltransferase efuC takes place. The final steps in enfumafungin biosynthesis require expansion of the 5-membered ring by lactonization via a Baeyer-Villiger reaction mediated by one of the BGC's cytochrome P450 monooxygenases (efuB, efuG or efuH) followed by ring cleavage. This type of reaction would establish a double bond between C-20 and C-21 which could be reduced by the reductase efuL to form the final product. This chain is Enfumafungin synthase efuA, found in Hormonema carpetanum.